A 149-amino-acid chain; its full sequence is Macrodomain Ter protein (149 aa).

It belongs to the MatP family. Homodimer.

The protein resides in the cytoplasm. Required for spatial organization of the terminus region of the chromosome (Ter macrodomain) during the cell cycle. Prevents early segregation of duplicated Ter macrodomains during cell division. Binds specifically to matS, which is a 13 bp signature motif repeated within the Ter macrodomain. This chain is Macrodomain Ter protein, found in Vibrio vulnificus (strain CMCP6).